The sequence spans 188 residues: Elongation factor P (188 aa).

Lysine 34 bears the N6-(3,6-diaminohexanoyl)-5-hydroxylysine mark.

Belongs to the elongation factor P family. May be beta-lysylated on the epsilon-amino group of Lys-34 by the combined action of EpmA and EpmB, and then hydroxylated on the C5 position of the same residue by EpmC (if this protein is present). Lysylation is critical for the stimulatory effect of EF-P on peptide-bond formation. The lysylation moiety may extend toward the peptidyltransferase center and stabilize the terminal 3-CCA end of the tRNA. Hydroxylation of the C5 position on Lys-34 may allow additional potential stabilizing hydrogen-bond interactions with the P-tRNA.

It is found in the cytoplasm. It functions in the pathway protein biosynthesis; polypeptide chain elongation. Functionally, involved in peptide bond synthesis. Alleviates ribosome stalling that occurs when 3 or more consecutive Pro residues or the sequence PPG is present in a protein, possibly by augmenting the peptidyl transferase activity of the ribosome. Modification of Lys-34 is required for alleviation. The chain is Elongation factor P from Vibrio cholerae serotype O1 (strain ATCC 39541 / Classical Ogawa 395 / O395).